Consider the following 307-residue polypeptide: 4-hydroxythreonine-4-phosphate dehydrogenase (307 aa).

H126 and T127 together coordinate substrate. A divalent metal cation contacts are provided by H156, H195, and H251. K259, N268, and R277 together coordinate substrate.

It belongs to the PdxA family. Homodimer. It depends on Zn(2+) as a cofactor. Mg(2+) is required as a cofactor. Co(2+) serves as cofactor.

The protein resides in the cytoplasm. It catalyses the reaction 4-(phosphooxy)-L-threonine + NAD(+) = 3-amino-2-oxopropyl phosphate + CO2 + NADH. It functions in the pathway cofactor biosynthesis; pyridoxine 5'-phosphate biosynthesis; pyridoxine 5'-phosphate from D-erythrose 4-phosphate: step 4/5. Catalyzes the NAD(P)-dependent oxidation of 4-(phosphooxy)-L-threonine (HTP) into 2-amino-3-oxo-4-(phosphooxy)butyric acid which spontaneously decarboxylates to form 3-amino-2-oxopropyl phosphate (AHAP). The sequence is that of 4-hydroxythreonine-4-phosphate dehydrogenase from Helicobacter pylori (strain G27).